Consider the following 289-residue polypeptide: Early E1A protein (289 aa).

Residues 41–49 (PTLHELYDL) form an interaction with RB1 in competition with E2F1 region. The tract at residues 76 to 140 (EGIDLLTFPP…PSDDEDEEGE (65 aa)) is interaction with UBE2I. Residues 82–107 (TFPPAPGSPEPPHLSRQPEQPEQRAL) form a disordered region. Positions 84–93 (PPAPGSPEPP) are enriched in pro residues. Ser-89 is modified (phosphoserine; by host). A PXLXP motif, interaction with host ZMYND11 motif is present at residues 113–117 (PNLVP). An LXCXE motif, interaction with host RB1 and TMEM173/STING motif is present at residues 122–126 (LTCHE). Residues 154–174 (CRSCHYHRRNTGDPDIMCSLC) fold into a zinc finger. The tract at residues 186-240 (PVSEPEPEPEPEPEPARPTRRPKMAPAILRRPTSPVSRECNSSTDSCDSGPSNTP) is disordered. Ser-219 and Ser-231 each carry phosphoserine; by host. Residues 219 to 237 (SPVSRECNSSTDSCDSGPS) show a composition bias toward polar residues. Residues 258–289 (RVGGRRQAVECIEDLLNEPGQPLDLSCKRPRP) carry the Bipartite nuclear localization signal motif. Residues 279–283 (PLDLS) carry the PXDLS motif, CTBP-binding motif.

The protein belongs to the adenoviridae E1A protein family. As to quaternary structure, interacts with host UBE2I; this interaction interferes with polySUMOylation. Interacts with host RB1; this interaction induces the aberrant dissociation of RB1-E2F1 complex thereby disrupting the activity of RB1 and activating E2F1-regulated genes. Interacts with host ATF7; the interaction enhances ATF7-mediated viral transactivation activity which requires the zinc binding domains of both proteins. Isoform early E1A 32 kDa protein and isoform early E1A 26 kDa protein interact (via N-terminus) with CUL1 and E3 ubiquitin ligase RBX1; these interactions inhibit RBX1-CUL1-dependent elongation reaction of ubiquitin chains and attenuate ubiquitination of SCF(FBXW7) target proteins. Interacts (via PXLXP motif) with host ZMYND11/BS69 (via MYND-type zinc finger); this interaction inhibits E1A mediated transactivation. Interacts with host EP300; this interaction stimulates the acetylation of RB1 by recruiting EP300 and RB1 into a multimeric-protein complex. Interacts with host CTBP1 and CTBP2; this interaction seems to potentiate viral replication. Interacts with host DCAF7 (ref.16). Interacts with host DYRK1A. Interacts with host KPNA4; this interaction allows E1A import into the host nucleus. Interacts with host EP400; this interaction stabilizes MYC. Interacts with host TBP protein; this interaction probably disrupts the TBP-TATA complex. Interacts (via LXCXE motif) with host TMEM173/STING; this interaction impairs the ability of TMEM173/STING to sense cytosolic DNA and promote the production of type I interferon (IFN-alpha and IFN-beta). Interacts (via C-terminus) with host ZBED1/hDREF (via C-terminus); the interaction is direct.

It is found in the host nucleus. Functionally, plays a role in viral genome replication by driving entry of quiescent cells into the cell cycle. Stimulation of progression from G1 to S phase allows the virus to efficiently use the cellular DNA replicating machinery to achieve viral genome replication. E1A protein has both transforming and trans-activating activities. Induces the disassembly of the E2F1 transcription factor from RB1 by direct competition for the same binding site on RB1, with subsequent transcriptional activation of E2F1-regulated S-phase genes and of the E2 region of the adenoviral genome. Release of E2F1 leads to the ARF-mediated inhibition of MDM2 and causes TP53/p53 to accumulate because it is not targeted for degradation by MDM2-mediated ubiquitination anymore. This increase in TP53, in turn, would arrest the cell proliferation and direct its death but this effect is counteracted by the viral protein E1B-55K. Inactivation of the ability of RB1 to arrest the cell cycle is critical for cellular transformation, uncontrolled cellular growth and proliferation induced by viral infection. Interaction with RBX1 and CUL1 inhibits ubiquitination of the proteins targeted by SCF(FBXW7) ubiquitin ligase complex, and may be linked to unregulated host cell proliferation. The tumorigenesis-restraining activity of E1A may be related to the disruption of the host CtBP-CtIP complex through the CtBP binding motif. Interaction with host TMEM173/STING impairs the ability of TMEM173/STING to sense cytosolic DNA and promote the production of type I interferon (IFN-alpha and IFN-beta). Promotes the sumoylation of host ZBED1/hDREF with SUMO1. This chain is Early E1A protein, found in Homo sapiens (Human).